Consider the following 391-residue polypeptide: Phosphoglycerate kinase (391 aa).

Residues 21-23 (DLN), Arg-36, 59-62 (HLGR), Arg-113, and Arg-146 each bind substrate. ATP-binding positions include Lys-197, Glu-319, and 345-348 (GGDT).

It belongs to the phosphoglycerate kinase family. Monomer.

It localises to the cytoplasm. It carries out the reaction (2R)-3-phosphoglycerate + ATP = (2R)-3-phospho-glyceroyl phosphate + ADP. It participates in carbohydrate degradation; glycolysis; pyruvate from D-glyceraldehyde 3-phosphate: step 2/5. The sequence is that of Phosphoglycerate kinase from Shewanella sp. (strain W3-18-1).